The primary structure comprises 446 residues: N-succinylarginine dihydrolase (446 aa).

Substrate is bound by residues 19 to 28 (AGLSFGNVAS), asparagine 110, and 137 to 138 (HR). Residue glutamate 174 is part of the active site. Arginine 213 lines the substrate pocket. Residue histidine 249 is part of the active site. Residues aspartate 251 and asparagine 364 each contribute to the substrate site. Cysteine 370 functions as the Nucleophile in the catalytic mechanism.

The protein belongs to the succinylarginine dihydrolase family. Homodimer.

It catalyses the reaction N(2)-succinyl-L-arginine + 2 H2O + 2 H(+) = N(2)-succinyl-L-ornithine + 2 NH4(+) + CO2. The protein operates within amino-acid degradation; L-arginine degradation via AST pathway; L-glutamate and succinate from L-arginine: step 2/5. Functionally, catalyzes the hydrolysis of N(2)-succinylarginine into N(2)-succinylornithine, ammonia and CO(2). This chain is N-succinylarginine dihydrolase, found in Burkholderia pseudomallei (strain 668).